A 177-amino-acid polypeptide reads, in one-letter code: Large ribosomal subunit protein uL6 (177 aa).

The protein belongs to the universal ribosomal protein uL6 family. Part of the 50S ribosomal subunit.

Functionally, this protein binds to the 23S rRNA, and is important in its secondary structure. It is located near the subunit interface in the base of the L7/L12 stalk, and near the tRNA binding site of the peptidyltransferase center. This Psychrobacter arcticus (strain DSM 17307 / VKM B-2377 / 273-4) protein is Large ribosomal subunit protein uL6.